The primary structure comprises 219 residues: Probable GTP-binding protein EngB (219 aa).

One can recognise an EngB-type G domain in the interval 24–207 (VQPEIAFAGR…HELIESWLRP (184 aa)). GTP is bound by residues 32–39 (GRSNAGKS), 59–63 (GRTQH), 81–84 (DLPG), 148–151 (TKCD), and 186–188 (FSA). Residues Ser-39 and Thr-61 each coordinate Mg(2+).

It belongs to the TRAFAC class TrmE-Era-EngA-EngB-Septin-like GTPase superfamily. EngB GTPase family. Requires Mg(2+) as cofactor.

Its function is as follows. Necessary for normal cell division and for the maintenance of normal septation. The chain is Probable GTP-binding protein EngB from Burkholderia ambifaria (strain ATCC BAA-244 / DSM 16087 / CCUG 44356 / LMG 19182 / AMMD) (Burkholderia cepacia (strain AMMD)).